The following is a 417-amino-acid chain: D-inositol 3-phosphate glycosyltransferase (417 aa).

Residue His-10 participates in 1D-myo-inositol 3-phosphate binding. Residues 16 to 17 and Gly-24 contribute to the UDP-N-acetyl-alpha-D-glucosamine site; that span reads QP. Residues 21–26, Lys-79, Tyr-112, Thr-136, and Arg-156 each bind 1D-myo-inositol 3-phosphate; that span reads DAGGMN. Arg-230, Lys-235, and Gln-296 together coordinate UDP-N-acetyl-alpha-D-glucosamine. The Mg(2+) site is built by Tyr-305, Arg-306, and Ala-308. UDP-N-acetyl-alpha-D-glucosamine-binding residues include Glu-318 and Glu-326. Thr-332 lines the Mg(2+) pocket.

The protein belongs to the glycosyltransferase group 1 family. MshA subfamily. Homodimer.

The catalysed reaction is 1D-myo-inositol 3-phosphate + UDP-N-acetyl-alpha-D-glucosamine = 1D-myo-inositol 2-acetamido-2-deoxy-alpha-D-glucopyranoside 3-phosphate + UDP + H(+). Its function is as follows. Catalyzes the transfer of a N-acetyl-glucosamine moiety to 1D-myo-inositol 3-phosphate to produce 1D-myo-inositol 2-acetamido-2-deoxy-glucopyranoside 3-phosphate in the mycothiol biosynthesis pathway. This chain is D-inositol 3-phosphate glycosyltransferase, found in Actinosynnema mirum (strain ATCC 29888 / DSM 43827 / JCM 3225 / NBRC 14064 / NCIMB 13271 / NRRL B-12336 / IMRU 3971 / 101).